The sequence spans 581 residues: MRHCDSFCELIPMKGCEAMLEWMIDQGAGREPADIVLKGGRFLDLITGELVESDIAICEDRIVGTFGTYRGKHEIDVSGRIVVPGFIDTHLHIASSQVTPHEFDRCVLPQGVTTAICDPHEIANVLGAEGIRFFLDSALETVMDIRVQLSSCVPATHMETSGAELLIDDLLPFADHPKVIGLAEFMNFPGVLAKDPECMAKLRAFQGRHIDGHAPLLRGLDLNGYIAAGIRTEHEATNAEEALEKLRKGMYVLVREGSVSKDLKALMPIITERHAQFLALCTDDRNPLDIADQGHLDYLIRTAIAGGVEPLAIYRAASVSAARVFGLFDRGLVAPGQRADLVVVDSLEGCHAEIVLSAGRVVSEALFAARKPVAEVGRNSVKAPRVTASNFRSQSNSGKTRAIGIVPGKIITQNLEFDLKVGPNGVEPDLERDVVKVAVIERHGKNGNIATGFVHGFGLKAGAIASTVSHDSHNICVVGASDEDIATAANRLGEIEGGFVVVRDGKVLAEMPLPIAGLMSTEPYETVREALRKLRHAAEDLGSVLEEPFLQLAFIALPVIPHLKITDRGLVDVDKFEFVGN.

The protein belongs to the metallo-dependent hydrolases superfamily. Adenine deaminase family. Requires Mn(2+) as cofactor.

It carries out the reaction adenine + H2O + H(+) = hypoxanthine + NH4(+). This Brucella abortus (strain 2308) protein is Adenine deaminase.